The primary structure comprises 448 residues: Porin AaxA (448 aa).

A signal peptide spans 1-24; sequence MASFRSSLLSALCAYGMMVMPAYA.

It belongs to the OprB family.

Its subcellular location is the cell outer membrane. Facilitates L-arginine uptake, as part of the AaxABC system. The arginine uptake by the bacterium in the macrophage may be a virulence factor against the host innate immune response. In Chlamydia abortus (strain DSM 27085 / S26/3) (Chlamydophila abortus), this protein is Porin AaxA (aaxA).